The chain runs to 309 residues: Ribonuclease Z (309 aa).

Zn(2+) contacts are provided by histidine 63, histidine 65, aspartate 67, histidine 68, histidine 141, aspartate 208, and histidine 266. The Proton acceptor role is filled by aspartate 67.

Belongs to the RNase Z family. Homodimer. It depends on Zn(2+) as a cofactor.

The catalysed reaction is Endonucleolytic cleavage of RNA, removing extra 3' nucleotides from tRNA precursor, generating 3' termini of tRNAs. A 3'-hydroxy group is left at the tRNA terminus and a 5'-phosphoryl group is left at the trailer molecule.. Its function is as follows. Zinc phosphodiesterase, which displays some tRNA 3'-processing endonuclease activity. Probably involved in tRNA maturation, by removing a 3'-trailer from precursor tRNA. The chain is Ribonuclease Z from Salinispora arenicola (strain CNS-205).